Consider the following 823-residue polypeptide: Semaphorin-4B (823 aa).

The first 30 residues, 1-30 (MGRASRSAVLRRALLLLLLLLLLRTTTTRA), serve as a signal peptide directing secretion. Residues 31–703 (LGPRISVPLG…WGADKSYWNE (673 aa)) are Extracellular-facing. In terms of domain architecture, Sema spans 34 to 510 (RISVPLGSEE…SHSGVVQVPV (477 aa)). 3 N-linked (GlcNAc...) asparagine glycosylation sites follow: N53, N56, and N83. Residues C107 and C118 are joined by a disulfide bond. Residue N129 is glycosylated (N-linked (GlcNAc...) asparagine). 3 cysteine pairs are disulfide-bonded: C136/C145, C273/C386, and C297/C346. 2 N-linked (GlcNAc...) asparagine glycosylation sites follow: N397 and N512. Positions 512–582 (NCSLYPTCGD…RFLVPGKPCK (71 aa)) constitute a PSI domain. C513 and C530 are joined by a disulfide. N-linked (GlcNAc...) asparagine glycans are attached at residues N567, N615, and N680. The region spanning 589 to 649 (NTVNTLACPL…FQCWSIEEGF (61 aa)) is the Ig-like C2-type domain. C596 and C642 are disulfide-bonded. Residues 704–724 (FLVMCTLFVFAMVLLFLFFLY) form a helical membrane-spanning segment. The Cytoplasmic portion of the chain corresponds to 725 to 823 (RHRDGMKLFL…LGSEIRDSVV (99 aa)). Phosphoserine is present on residues S779, S780, S804, and S816.

It belongs to the semaphorin family. As to quaternary structure, interacts with GIPC PDZ domain.

The protein localises to the membrane. Functionally, inhibits axonal extension by providing local signals to specify territories inaccessible for growing axons. In Mus musculus (Mouse), this protein is Semaphorin-4B.